We begin with the raw amino-acid sequence, 775 residues long: DNA polymerase (775 aa).

It belongs to the DNA polymerase type-B family. In terms of assembly, monomer.

It catalyses the reaction DNA(n) + a 2'-deoxyribonucleoside 5'-triphosphate = DNA(n+1) + diphosphate. Its activity is regulated as follows. An 11-mer corresponding to the PIP-box of RfcL inhibits DNA synthesis. In addition to polymerase activity, this DNA polymerase exhibits 3' to 5' exonuclease activity. This is DNA polymerase (pol) from Pyrococcus furiosus (strain ATCC 43587 / DSM 3638 / JCM 8422 / Vc1).